A 430-amino-acid polypeptide reads, in one-letter code: Mannosylglucosylglycerate synthase (430 aa).

Belongs to the glycosyltransferase group 1 family. The cofactor is a divalent metal cation.

The enzyme catalyses (2R)-2-O-(alpha-D-glucopyranosyl)-glycerate + GDP-alpha-D-mannose = (2R)-2-O-[alpha-D-mannopyranosyl-(1-&gt;2)-alpha-D-glucopyranosyl]-glycerate + GDP + H(+). Functionally, involved in the biosynthesis of the compatible solute mannosylglucosylglycerate through a nonphosphorylating pathway. Catalyzes the synthesis of mannosylglucosylglycerate (MGG) from glucosylglycerate (GG) and GDP-mannose. This chain is Mannosylglucosylglycerate synthase, found in Petrotoga mobilis (strain DSM 10674 / SJ95).